Here is a 36-residue protein sequence, read N- to C-terminus: Turgencin-A (36 aa).

3 disulfides stabilise this stretch: cysteine 8–cysteine 33, cysteine 12–cysteine 29, and cysteine 17–cysteine 26. Methionine 10 is modified (methionine sulfoxide). Valine amide is present on valine 36.

It localises to the secreted. Functionally, has antimicrobial activity against Gram-positive bacteria (C.glutamicum ATCC 13032 (MIC=0.4 uM), B.subtilis ATCC 23857 (MIC=0.4 uM) and S.aureus ATCC 9144 (MIC=6.3 uM)) and Gram-negative bacteria (E.coli ATCC 25922 (MIC=0.8 uM) and P.aeruginosa ATCC 27853 (MIC=1.6 uM)). In Synoicum turgens (Colonial ascidian), this protein is Turgencin-A.